Reading from the N-terminus, the 98-residue chain is MPRPKKCRQLSSCVPCSLFKPNGIPAANLSQILLAADEFEALELGDVQRLSQLEAAAQMGISRQTFGYLLASARQKVATAITQGLVLKLPTPNDKDPI.

It belongs to the UPF0251 family.

This Shewanella oneidensis (strain ATCC 700550 / JCM 31522 / CIP 106686 / LMG 19005 / NCIMB 14063 / MR-1) protein is UPF0251 protein SO_0727.